The following is a 136-amino-acid chain: Histone H3-7 (136 aa).

The segment at 1–43 (MARTKQTARKSTGGKAPRKQLATKAARKSAPATGGVKKPHRYR) is disordered. Asymmetric dimethylarginine is present on Arg-3. Arg-3 carries the citrulline; alternate modification. Thr-4 bears the Phosphothreonine mark. At Lys-5 the chain carries Allysine; alternate. An N6,N6,N6-trimethyllysine; alternate modification is found at Lys-5. Residue Lys-5 is modified to N6,N6-dimethyllysine; alternate. An N6-(2-hydroxyisobutyryl)lysine; alternate modification is found at Lys-5. Position 5 is an N6-(beta-hydroxybutyryl)lysine; alternate (Lys-5). N6-acetyllysine; alternate is present on Lys-5. Lys-5 carries the post-translational modification N6-methyllysine; alternate. Residue Gln-6 is modified to 5-glutamyl dopamine; alternate. Gln-6 is modified (5-glutamyl serotonin; alternate). Position 7 is a phosphothreonine (Thr-7). A Citrulline; alternate modification is found at Arg-9. Arg-9 bears the Symmetric dimethylarginine mark. Lys-10 bears the N6,N6,N6-trimethyllysine; alternate mark. At Lys-10 the chain carries N6,N6-dimethyllysine; alternate. The residue at position 10 (Lys-10) is an N6-(2-hydroxyisobutyryl)lysine; alternate. Lys-10 is modified (N6-(beta-hydroxybutyryl)lysine; alternate). The residue at position 10 (Lys-10) is an N6-acetyllysine; alternate. An N6-methyllysine; alternate modification is found at Lys-10. Position 10 is an N6-lactoyllysine; alternate (Lys-10). Ser-11 is subject to ADP-ribosylserine; alternate. A Phosphoserine; alternate modification is found at Ser-11. A Phosphothreonine modification is found at Thr-12. An N6-(2-hydroxyisobutyryl)lysine; alternate modification is found at Lys-15. Lys-15 carries the N6-(beta-hydroxybutyryl)lysine; alternate modification. Lys-15 carries the N6-acetyllysine; alternate modification. Lys-15 carries the N6-lactoyllysine; alternate modification. An N6-glutaryllysine; alternate modification is found at Lys-15. Lys-15 is modified (N6-succinyllysine; alternate). Asymmetric dimethylarginine is present on Arg-18. Position 18 is a citrulline; alternate (Arg-18). 2 positions are modified to N6-(2-hydroxyisobutyryl)lysine; alternate: Lys-19 and Lys-24. An N6-(beta-hydroxybutyryl)lysine; alternate mark is found at Lys-19 and Lys-24. 2 positions are modified to N6-acetyllysine; alternate: Lys-19 and Lys-24. N6-methyllysine; alternate occurs at positions 19 and 24. 2 positions are modified to N6-lactoyllysine; alternate: Lys-19 and Lys-24. An N6-glutaryllysine; alternate mark is found at Lys-19 and Lys-24. 2 positions are modified to N6-butyryllysine; alternate: Lys-19 and Lys-24. Arg-27 is subject to Citrulline. Lys-28 is subject to N6,N6,N6-trimethyllysine; alternate. Lys-28 is subject to N6,N6-dimethyllysine; alternate. An N6-(2-hydroxyisobutyryl)lysine; alternate modification is found at Lys-28. Position 28 is an N6-acetyllysine; alternate (Lys-28). Lys-28 carries the N6-methyllysine; alternate modification. Residue Lys-28 is modified to N6-lactoyllysine; alternate. Residue Lys-28 is modified to N6-glutaryllysine; alternate. The residue at position 29 (Ser-29) is an ADP-ribosylserine; alternate. At Ser-29 the chain carries Phosphoserine; alternate. Lys-37 is modified (N6,N6,N6-trimethyllysine; alternate). Lys-37 is modified (N6,N6-dimethyllysine; alternate). Position 37 is an N6-(2-hydroxyisobutyryl)lysine; alternate (Lys-37). N6-acetyllysine; alternate is present on Lys-37. Lys-37 carries the post-translational modification N6-methyllysine; alternate. Lys-38 bears the N6-methyllysine mark. At Tyr-42 the chain carries Phosphotyrosine. Lys-57 carries the N6,N6,N6-trimethyllysine; alternate modification. Lys-57 carries the post-translational modification N6-(2-hydroxyisobutyryl)lysine; alternate. At Lys-57 the chain carries N6-(beta-hydroxybutyryl)lysine; alternate. The residue at position 57 (Lys-57) is an N6-acetyllysine; alternate. The residue at position 57 (Lys-57) is an N6-lactoyllysine; alternate. Lys-57 carries the N6-glutaryllysine; alternate modification. At Lys-57 the chain carries N6-succinyllysine; alternate. The residue at position 57 (Lys-57) is an N6-methyllysine. A Phosphoserine modification is found at Ser-58. An N6-(2-hydroxyisobutyryl)lysine; alternate mark is found at Lys-65 and Lys-80. Lys-65 and Lys-80 each carry N6-methyllysine; alternate. Lys-80 carries the post-translational modification N6,N6,N6-trimethyllysine; alternate. The residue at position 80 (Lys-80) is an N6,N6-dimethyllysine; alternate. Lys-80 bears the N6-acetyllysine; alternate mark. Lys-80 is subject to N6-lactoyllysine; alternate. Lys-80 carries the N6-glutaryllysine; alternate modification. Lys-80 carries the post-translational modification N6-succinyllysine; alternate. Thr-81 carries the phosphothreonine modification. The residue at position 87 (Ser-87) is a Phosphoserine. The residue at position 108 (Thr-108) is a Phosphothreonine. Lys-116 and Lys-123 each carry N6-acetyllysine; alternate. 2 positions are modified to N6-glutaryllysine; alternate: Lys-116 and Lys-123. Lys-123 carries the N6-(2-hydroxyisobutyryl)lysine; alternate modification. N6-methyllysine; alternate is present on Lys-123. Lys-123 bears the N6-succinyllysine; alternate mark.

The protein belongs to the histone H3 family. As to quaternary structure, the nucleosome is a histone octamer containing two molecules each of H2A, H2B, H3 and H4 assembled in one H3-H4 heterotetramer and two H2A-H2B heterodimers. The octamer wraps approximately 147 bp of DNA. During nucleosome assembly the chaperone ASF1A interacts with the histone H3-H4 heterodimer. Acetylation is generally linked to gene activation. Acetylation on Lys-10 (H3K9ac) impairs methylation at Arg-9 (H3R8me2s). Acetylation on Lys-19 (H3K18ac) and Lys-24 (H3K24ac) favors methylation at Arg-18 (H3R17me). Acetylation at Lys-123 (H3K122ac) by EP300/p300 plays a central role in chromatin structure: localizes at the surface of the histone octamer and stimulates transcription, possibly by promoting nucleosome instability. In terms of processing, citrullination at Arg-9 (H3R8ci) and/or Arg-18 (H3R17ci) by PADI4 impairs methylation and represses transcription. Post-translationally, asymmetric dimethylation at Arg-18 (H3R17me2a) by CARM1 is linked to gene activation. Symmetric dimethylation at Arg-9 (H3R8me2s) by PRMT5 is linked to gene repression. Asymmetric dimethylation at Arg-3 (H3R2me2a) by PRMT6 is linked to gene repression and is mutually exclusive with H3 Lys-5 methylation (H3K4me2 and H3K4me3). H3R2me2a is present at the 3' of genes regardless of their transcription state and is enriched on inactive promoters, while it is absent on active promoters. Methylation at Lys-5 (H3K4me), Lys-37 (H3K36me) and Lys-80 (H3K79me) are linked to gene activation. Methylation at Lys-5 (H3K4me) facilitates subsequent acetylation of H3 and H4. Methylation at Lys-80 (H3K79me) is associated with DNA double-strand break (DSB) responses and is a specific target for TP53BP1. Methylation at Lys-10 (H3K9me) and Lys-28 (H3K27me) are linked to gene repression. Methylation at Lys-10 (H3K9me) is a specific target for HP1 proteins (CBX1, CBX3 and CBX5) and prevents subsequent phosphorylation at Ser-11 (H3S10ph) and acetylation of H3 and H4. Methylation at Lys-5 (H3K4me) and Lys-80 (H3K79me) require preliminary monoubiquitination of H2B at 'Lys-120'. Methylation at Lys-10 (H3K9me) and Lys-28 (H3K27me) are enriched in inactive X chromosome chromatin. Monomethylation at Lys-57 (H3K56me1) by EHMT2/G9A in G1 phase promotes interaction with PCNA and is required for DNA replication. In terms of processing, phosphorylated at Thr-4 (H3T3ph) by HASPIN during prophase and dephosphorylated during anaphase. Phosphorylation at Ser-11 (H3S10ph) by AURKB is crucial for chromosome condensation and cell-cycle progression during mitosis and meiosis. In addition phosphorylation at Ser-11 (H3S10ph) by RPS6KA4 and RPS6KA5 is important during interphase because it enables the transcription of genes following external stimulation, like mitogens, stress, growth factors or UV irradiation and result in the activation of genes, such as c-fos and c-jun. Phosphorylation at Ser-11 (H3S10ph), which is linked to gene activation, prevents methylation at Lys-10 (H3K9me) but facilitates acetylation of H3 and H4. Phosphorylation at Ser-11 (H3S10ph) by AURKB mediates the dissociation of HP1 proteins (CBX1, CBX3 and CBX5) from heterochromatin. Phosphorylation at Ser-11 (H3S10ph) is also an essential regulatory mechanism for neoplastic cell transformation. Phosphorylated at Ser-29 (H3S28ph) by MAP3K20 isoform 1, RPS6KA5 or AURKB during mitosis or upon ultraviolet B irradiation. Phosphorylation at Thr-7 (H3T6ph) by PRKCB is a specific tag for epigenetic transcriptional activation that prevents demethylation of Lys-5 (H3K4me) by LSD1/KDM1A. At centromeres, specifically phosphorylated at Thr-12 (H3T11ph) from prophase to early anaphase, by DAPK3 and PKN1. Phosphorylation at Thr-12 (H3T11ph) by PKN1 or isoform M2 of PKM (PKM2) is a specific tag for epigenetic transcriptional activation that promotes demethylation of Lys-10 (H3K9me) by KDM4C/JMJD2C. Phosphorylation at Tyr-42 (H3Y41ph) by JAK2 promotes exclusion of CBX5 (HP1 alpha) from chromatin. Post-translationally, ubiquitinated. Lysine deamination at Lys-5 (H3K4all) to form allysine is mediated by LOXL2. Allysine formation by LOXL2 only takes place on H3K4me3 and results in gene repression. In terms of processing, butyrylation of histones marks active promoters and competes with histone acetylation. It is present during late spermatogenesis. Post-translationally, succinylation at Lys-80 (H3K79succ) by KAT2A takes place with a maximum frequency around the transcription start sites of genes. It gives a specific tag for epigenetic transcription activation. Desuccinylation at Lys-123 (H3K122succ) by SIRT7 in response to DNA damage promotes chromatin condensation and double-strand breaks (DSBs) repair. Serine ADP-ribosylation constitutes the primary form of ADP-ribosylation of proteins in response to DNA damage. Serine ADP-ribosylation at Ser-11 (H3S10ADPr) is mutually exclusive with phosphorylation at Ser-11 (H3S10ph) and impairs acetylation at Lys-10 (H3K9ac).

It is found in the nucleus. The protein localises to the chromosome. Its function is as follows. Core component of nucleosome. Nucleosomes wrap and compact DNA into chromatin, limiting DNA accessibility to the cellular machineries which require DNA as a template. Histones thereby play a central role in transcription regulation, DNA repair, DNA replication and chromosomal stability. DNA accessibility is regulated via a complex set of post-translational modifications of histones, also called histone code, and nucleosome remodeling. This is Histone H3-7 from Homo sapiens (Human).